The primary structure comprises 466 residues: Acetyl-coenzyme A carboxylase carboxyl transferase subunit beta, chloroplastic (466 aa).

The CoA carboxyltransferase N-terminal domain maps to 198 to 466 (LWIQCENCYE…FPLNQNSIGQ (269 aa)). Zn(2+) contacts are provided by Cys202, Cys205, Cys221, and Cys224. A C4-type zinc finger spans residues 202–224 (CENCYELNYKKLLKSKMRICDEC).

This sequence belongs to the AccD/PCCB family. As to quaternary structure, acetyl-CoA carboxylase is a heterohexamer composed of biotin carboxyl carrier protein, biotin carboxylase and 2 subunits each of ACCase subunit alpha and ACCase plastid-coded subunit beta (accD). Zn(2+) serves as cofactor.

Its subcellular location is the plastid. The protein localises to the chloroplast stroma. The enzyme catalyses N(6)-carboxybiotinyl-L-lysyl-[protein] + acetyl-CoA = N(6)-biotinyl-L-lysyl-[protein] + malonyl-CoA. The protein operates within lipid metabolism; malonyl-CoA biosynthesis; malonyl-CoA from acetyl-CoA: step 1/1. Its function is as follows. Component of the acetyl coenzyme A carboxylase (ACC) complex. Biotin carboxylase (BC) catalyzes the carboxylation of biotin on its carrier protein (BCCP) and then the CO(2) group is transferred by the transcarboxylase to acetyl-CoA to form malonyl-CoA. The sequence is that of Acetyl-coenzyme A carboxylase carboxyl transferase subunit beta, chloroplastic from Fagopyrum esculentum subsp. ancestrale (Wild buckwheat).